Here is a 617-residue protein sequence, read N- to C-terminus: RNA polymerase sigma factor RpoD (617 aa).

Residues 170–220 form a disordered region; it reads PDDGSLPAEEVEPVNLKDDSADSKEKDDEEEESDDSSDSDDEGDGGPDPEE. The segment covering 184-195 has biased composition (basic and acidic residues); that stretch reads NLKDDSADSKEK. Acidic residues predominate over residues 196–218; it reads DDEEEESDDSSDSDDEGDGGPDP. The segment at 383–453 is sigma-70 factor domain-2; it reads MVEANLRLVI…TRSIADQART (71 aa). An Interaction with polymerase core subunit RpoC motif is present at residues 407 to 410; the sequence is DLIQ. A sigma-70 factor domain-3 region spans residues 462 to 538; that stretch reads ETINKLNRIS…DSTMQSPIEM (77 aa). The interval 551 to 604 is sigma-70 factor domain-4; it reads VLAGLTAREAKVLRMRFGIDMNTDHTLEEVGKQFDVTRERIRQIEAKALRKLRH. The H-T-H motif DNA-binding region spans 577–596; sequence LEEVGKQFDVTRERIRQIEA.

It belongs to the sigma-70 factor family. RpoD/SigA subfamily. Interacts transiently with the RNA polymerase catalytic core.

The protein localises to the cytoplasm. In terms of biological role, sigma factors are initiation factors that promote the attachment of RNA polymerase to specific initiation sites and are then released. This sigma factor is the primary sigma factor during exponential growth. This Pseudomonas aeruginosa (strain ATCC 15692 / DSM 22644 / CIP 104116 / JCM 14847 / LMG 12228 / 1C / PRS 101 / PAO1) protein is RNA polymerase sigma factor RpoD.